Reading from the N-terminus, the 336-residue chain is D-alanine--D-alanine ligase (336 aa).

The region spanning 124-330 (KMWFSALGIP…FTEYLSLVIN (207 aa)) is the ATP-grasp domain. An ATP-binding site is contributed by 154–209 (ALENWGSIFVKAASQGSSVGCYKVDDSSKVAGVLKDAFGYAPYVIVEKTIKARELE). Residues D284, E297, and N299 each coordinate Mg(2+).

This sequence belongs to the D-alanine--D-alanine ligase family. Mg(2+) is required as a cofactor. Mn(2+) serves as cofactor.

It localises to the cytoplasm. The catalysed reaction is 2 D-alanine + ATP = D-alanyl-D-alanine + ADP + phosphate + H(+). It functions in the pathway cell wall biogenesis; peptidoglycan biosynthesis. In terms of biological role, cell wall formation. This chain is D-alanine--D-alanine ligase, found in Shewanella sp. (strain MR-4).